A 900-amino-acid chain; its full sequence is Isoleucine--tRNA ligase (900 aa).

A 'HIGH' region motif is present at residues 58–68; the sequence is PYANGNIHIGH. Glutamate 552 provides a ligand contact to L-isoleucyl-5'-AMP. The short motif at 593 to 597 is the 'KMSKS' region element; that stretch reads KMSKS. Residue lysine 596 participates in ATP binding.

The protein belongs to the class-I aminoacyl-tRNA synthetase family. IleS type 1 subfamily. In terms of assembly, monomer.

The protein localises to the cytoplasm. The catalysed reaction is tRNA(Ile) + L-isoleucine + ATP = L-isoleucyl-tRNA(Ile) + AMP + diphosphate. Its function is as follows. Catalyzes the attachment of isoleucine to tRNA(Ile). As IleRS can inadvertently accommodate and process structurally similar amino acids such as valine, to avoid such errors it has two additional distinct tRNA(Ile)-dependent editing activities. One activity is designated as 'pretransfer' editing and involves the hydrolysis of activated Val-AMP. The other activity is designated 'posttransfer' editing and involves deacylation of mischarged Val-tRNA(Ile). This is Isoleucine--tRNA ligase from Ureaplasma parvum serovar 3 (strain ATCC 700970).